The following is a 742-amino-acid chain: Glucosylceramidase (742 aa).

N-linked (GlcNAc...) asparagine glycans are attached at residues Asn37 and Asn160. The active-site Proton donor is Glu258. Residue Asn388 is glycosylated (N-linked (GlcNAc...) asparagine). The active-site Nucleophile is the Glu492. N-linked (GlcNAc...) asparagine glycans are attached at residues Asn552, Asn560, and Asn698. The helical transmembrane segment at 701 to 721 (IAQILVAVVILLLGVLVAYYA) threads the bilayer.

Belongs to the glycosyl hydrolase 5 (cellulase A) family.

It is found in the membrane. It carries out the reaction a beta-D-glucosyl-(1&lt;-&gt;1')-N-acylsphing-4-enine + H2O = an N-acylsphing-4-enine + D-glucose. Its function is as follows. Specifically hydrolyzes the glucosidic linkage in glucosylceramide. May prevent accumulation of aberrent glucosylceramide containing immature ceramide. The protein is Glucosylceramidase of Cryptococcus neoformans var. grubii serotype A (strain H99 / ATCC 208821 / CBS 10515 / FGSC 9487) (Filobasidiella neoformans var. grubii).